Reading from the N-terminus, the 452-residue chain is Transcription factor SMP1 (452 aa).

The region spanning 3-57 (RRKIEIEPIKDDRNRTVTFIKRKAGLFKKAHELSVLCQVDIAVIILGSNNTFYEY) is the MADS-box domain. Residues 58–87 (SSVDMSNLLNVHQNNTDLPHNIIEPSDYGD) constitute a DNA-binding region (mef2-type). The disordered stretch occupies residues 97–142 (NERKRRRRRATVLQPASHSGSCTVSSQDSSSVQNNGNLSAPLASND). Low complexity predominate over residues 115-127 (SGSCTVSSQDSSS).

This sequence belongs to the MEF2 family. As to quaternary structure, can heterodimerize with RLM1. Interacts with HOG1. Phosphorylated by HOG1.

It is found in the nucleus. Functionally, transcription factor that controls part of the HOG1-mediated osmostress responses. Binds to the DNA sequence 5'-ACTACTA[TA](4)TAG-3'. Does not appear to function in the MPK1 pathway. This Saccharomyces cerevisiae (strain ATCC 204508 / S288c) (Baker's yeast) protein is Transcription factor SMP1 (SMP1).